We begin with the raw amino-acid sequence, 76 residues long: Vasotab-TY1 (76 aa).

Residues 1–21 (MKFTLFSVLVVLLIATFVAAD) form the signal peptide. A Kazal-like domain is found at 22-76 (DCPRICTADFRPVCGTPSGGRRSANRTFGNQCSLDSHNCLNKGDTYDKLHDGECK). Disulfide bonds link Cys23–Cys60, Cys27–Cys53, and Cys35–Cys75.

In terms of tissue distribution, expressed by the salivary gland.

It is found in the secreted. In terms of biological role, vasodilator protein that inhibits vasoconstriction of isolated rat femoral artery induced by phenylephrine. Since platelet aggregation and vasoconstriction are key hemostatic responses, particularly in small wounds, this protein likely participates in the antihemostatic responses during blood feeding. Blocks L-type calcium channels (Cav1/CACNA1) in left ventricular myocytes isolated from rat hearts. This Tabanus yao (Horsefly) protein is Vasotab-TY1.